The chain runs to 1035 residues: Potassium-transporting ATPase alpha chain 1 (1035 aa).

The disordered stretch occupies residues 1 to 41 (MGKADNYELYSVELGPGPGGDMAAKMSKKKKAGGGGGKRKE). The Cytoplasmic portion of the chain corresponds to 1-98 (MGKADNYELY…NALRPPRGTP (98 aa)). Phosphotyrosine is present on residues Tyr-7 and Tyr-10. Over residues 26–40 (MSKKKKAGGGGGKRK) the composition is skewed to basic residues. Ser-27 is subject to Phosphoserine. The helical transmembrane segment at 99–119 (EYVKFARQLAGGLQCLMWVAA) threads the bilayer. At 120 to 142 (AICLIAFAIQASEGDLTTDDNLY) the chain is on the lumenal side. Residues 143–163 (LALALIAVVVVTGCFGYYQEF) traverse the membrane as a helical segment. The Cytoplasmic portion of the chain corresponds to 164 to 299 (KSTNIIASFK…NEKTPIAIEI (136 aa)). The helical transmembrane segment at 300-319 (EHFVDIIAGLAILFGATFFV) threads the bilayer. Residues 320-331 (VAMCIGYTFLRA) are Lumenal-facing. The chain crosses the membrane as a helical span at residues 332 to 349 (MVFFMAIVVAYVPEGLLA). K(+)-binding residues include Val-340, Ala-341, Val-343, and Glu-345. The Cytoplasmic segment spans residues 350–783 (TVTVCLSLTA…EQGRLIFDNL (434 aa)). The active-site 4-aspartylphosphate intermediate is the Asp-387. 2 residues coordinate Mg(2+): Asp-387 and Thr-389. 2 positions are modified to phosphoserine: Ser-463 and Ser-601. Mg(2+) contacts are provided by Asp-728 and Asp-732. Residues 784–803 (KKSIAYTLTKNIPELTPYLI) traverse the membrane as a helical segment. Glu-797 lines the K(+) pocket. Topologically, residues 804–813 (YITVSVPLPL) are lumenal. A helical membrane pass occupies residues 814-834 (GCITILFIELCTDIFPSVSLA). Residue Glu-822 coordinates K(+). At 835–854 (YEKAESDIMHLRPRNPKRDR) the chain is on the cytoplasmic side. Ser-840 is modified (phosphoserine). A helical membrane pass occupies residues 855–877 (LVNEPLAAYSYFQIGAIQSFAGF). Topologically, residues 878–929 (TDYFTAMAQEGWFPLLCVGLRPQWEDHHLQDLQDSYGQEWTFGQRLYQQYTC) are lumenal. Residues 930 to 949 (YTVFFISIEMCQIADVLIRK) form a helical membrane-spanning segment. Topologically, residues 950 to 963 (TRRLSAFQQGFFRN) are cytoplasmic. Ser-954 is modified (phosphoserine; by PKA). A helical transmembrane segment spans residues 964–982 (RILVIAIVFQVCIGCFLCY). Residues 983–997 (CPGMPNIFNFMPIRF) are Lumenal-facing. Residues 998–1018 (QWWLVPMPFGLLIFVYDEIRK) form a helical membrane-spanning segment. Residues 1019 to 1035 (LGVRCCPGSWWDQELYY) are Cytoplasmic-facing.

The protein belongs to the cation transport ATPase (P-type) (TC 3.A.3) family. Type IIC subfamily. In terms of assembly, the gastric H(+)/K(+) ATPase pump is composed of the catalytic alpha subunit ATP4A and the regulatory beta subunit ATP4B. Interacts (via the P-domain) with ATP4B (via N-terminus); this interaction stabilizes the lumenal-open E2 conformation state and prevents the reverse reaction of the transport cycle.

It localises to the apical cell membrane. Its subcellular location is the cell membrane. The enzyme catalyses K(+)(out) + ATP + H2O + H(+)(in) = K(+)(in) + ADP + phosphate + 2 H(+)(out). In terms of biological role, the catalytic subunit of the gastric H(+)/K(+) ATPase pump which transports H(+) ions in exchange for K(+) ions across the apical membrane of parietal cells. Uses ATP as an energy source to pump H(+) ions to the gastric lumen while transporting K(+) ion from the lumen into the cell. Remarkably generates a million-fold proton gradient across the gastric parietal cell membrane, acidifying the gastric juice down to pH 1. Within a transport cycle, the transfer of a H(+) ion across the membrane is coupled to ATP hydrolysis and is associated with a transient phosphorylation that shifts the pump conformation from inward-facing (E1) to outward-facing state (E2). The release of the H(+) ion in the stomach lumen is followed by binding of K(+) ion converting the pump conformation back to the E1 state. The polypeptide is Potassium-transporting ATPase alpha chain 1 (ATP4A) (Oryctolagus cuniculus (Rabbit)).